A 691-amino-acid polypeptide reads, in one-letter code: Elongation factor G (691 aa).

Positions 10-284 (KRLRNIGIAA…AVVDYLPSPL (275 aa)) constitute a tr-type G domain. GTP-binding positions include 19-26 (AHIDAGKT), 83-87 (DTPGH), and 137-140 (NKMD).

It belongs to the TRAFAC class translation factor GTPase superfamily. Classic translation factor GTPase family. EF-G/EF-2 subfamily.

The protein localises to the cytoplasm. Catalyzes the GTP-dependent ribosomal translocation step during translation elongation. During this step, the ribosome changes from the pre-translocational (PRE) to the post-translocational (POST) state as the newly formed A-site-bound peptidyl-tRNA and P-site-bound deacylated tRNA move to the P and E sites, respectively. Catalyzes the coordinated movement of the two tRNA molecules, the mRNA and conformational changes in the ribosome. In Thermus thermophilus (strain ATCC 27634 / DSM 579 / HB8), this protein is Elongation factor G (fusA).